Here is a 155-residue protein sequence, read N- to C-terminus: Ribonuclease H (155 aa).

The RNase H type-1 domain occupies 1-142 (MLKQVEIFTD…CDELARNAAG (142 aa)). Mg(2+) contacts are provided by Asp10, Glu48, Asp70, and Asp134.

The protein belongs to the RNase H family. In terms of assembly, monomer. The cofactor is Mg(2+).

The protein localises to the cytoplasm. The catalysed reaction is Endonucleolytic cleavage to 5'-phosphomonoester.. In terms of biological role, endonuclease that specifically degrades the RNA of RNA-DNA hybrids. This chain is Ribonuclease H, found in Erwinia tasmaniensis (strain DSM 17950 / CFBP 7177 / CIP 109463 / NCPPB 4357 / Et1/99).